The sequence spans 631 residues: 1-deoxy-D-xylulose-5-phosphate synthase (631 aa).

Residues H76 and 117–119 (AHS) contribute to the thiamine diphosphate site. D148 serves as a coordination point for Mg(2+). Thiamine diphosphate contacts are provided by residues 149–150 (GA), N177, Y284, and E365. N177 serves as a coordination point for Mg(2+).

The protein belongs to the transketolase family. DXPS subfamily. Homodimer. Requires Mg(2+) as cofactor. The cofactor is thiamine diphosphate.

The enzyme catalyses D-glyceraldehyde 3-phosphate + pyruvate + H(+) = 1-deoxy-D-xylulose 5-phosphate + CO2. It participates in metabolic intermediate biosynthesis; 1-deoxy-D-xylulose 5-phosphate biosynthesis; 1-deoxy-D-xylulose 5-phosphate from D-glyceraldehyde 3-phosphate and pyruvate: step 1/1. In terms of biological role, catalyzes the acyloin condensation reaction between C atoms 2 and 3 of pyruvate and glyceraldehyde 3-phosphate to yield 1-deoxy-D-xylulose-5-phosphate (DXP). The sequence is that of 1-deoxy-D-xylulose-5-phosphate synthase from Methylibium petroleiphilum (strain ATCC BAA-1232 / LMG 22953 / PM1).